Here is a 338-residue protein sequence, read N- to C-terminus: Lipoate-protein ligase A (338 aa).

Residues 29–216 form the BPL/LPL catalytic domain; sequence PATQRVLFLW…AFFAHYGERV (188 aa). Residues Arg-71, 76–79, and Lys-134 contribute to the ATP site; that span reads GAVF. Lys-134 is a (R)-lipoate binding site.

This sequence belongs to the LplA family. Monomer.

The protein localises to the cytoplasm. The catalysed reaction is L-lysyl-[lipoyl-carrier protein] + (R)-lipoate + ATP = N(6)-[(R)-lipoyl]-L-lysyl-[lipoyl-carrier protein] + AMP + diphosphate + H(+). It functions in the pathway protein modification; protein lipoylation via exogenous pathway; protein N(6)-(lipoyl)lysine from lipoate: step 1/2. Its pathway is protein modification; protein lipoylation via exogenous pathway; protein N(6)-(lipoyl)lysine from lipoate: step 2/2. In terms of biological role, catalyzes both the ATP-dependent activation of exogenously supplied lipoate to lipoyl-AMP and the transfer of the activated lipoyl onto the lipoyl domains of lipoate-dependent enzymes. The sequence is that of Lipoate-protein ligase A from Salmonella typhimurium (strain LT2 / SGSC1412 / ATCC 700720).